We begin with the raw amino-acid sequence, 578 residues long: Cholesterol oxidase (578 aa).

FAD is bound by residues glycine 15, glutamate 34, glycine 85, alanine 90, and valine 230. Histidine 470 serves as the catalytic Proton acceptor. Glycine 503 contacts FAD. The disordered stretch occupies residues 529–551; it reads WPNKGETDRRPPQGEPYRRLAPI. The segment covering 533–546 has biased composition (basic and acidic residues); it reads GETDRRPPQGEPYR.

The protein belongs to the GMC oxidoreductase family. FAD is required as a cofactor.

The protein resides in the secreted. The catalysed reaction is cholesterol + O2 = cholest-5-en-3-one + H2O2. It carries out the reaction cholest-5-en-3-one = cholest-4-en-3-one. It participates in steroid metabolism; cholesterol degradation. Functionally, bifunctional enzyme that catalyzes the oxidation and isomerization of cholesterol to cholestenone (cholest-4-en-3-one), an initial step in the cholesterol degradation process. Contributes to virulence. The chain is Cholesterol oxidase (choD) from Mycobacterium tuberculosis (strain CDC 1551 / Oshkosh).